Here is a 276-residue protein sequence, read N- to C-terminus: GPN-loop GTPase 3 (276 aa).

Position 13–18 (13–18) interacts with GTP; it reads SSGKST. Positions 70–72 match the Gly-Pro-Asn (GPN)-loop; involved in dimer interface motif; sequence GPN. 173 to 176 contacts GTP; it reads SKMD. Residues 257-276 form a disordered region; it reads EDQEPKDPDRFEADDLEDDE. Basic and acidic residues predominate over residues 259-269; sequence QEPKDPDRFEA.

The protein belongs to the GPN-loop GTPase family. As to quaternary structure, heterodimers with gpn1 or gpn2. Binds to RNA polymerase II (RNAPII).

Its subcellular location is the cytoplasm. The protein resides in the nucleus. Small GTPase required for proper nuclear import of RNA polymerase II and III (RNAPII and RNAPIII). May act at an RNAP assembly step prior to nuclear import. The sequence is that of GPN-loop GTPase 3 from Schizosaccharomyces pombe (strain 972 / ATCC 24843) (Fission yeast).